The chain runs to 142 residues: Hemoglobin subunit alpha (142 aa).

The region spanning 2–142 is the Globin domain; the sequence is VLSDADKTHV…VATVLTSKYR (141 aa). Phosphoserine is present on S4. K8 is modified (N6-succinyllysine). Phosphothreonine is present on T9. N6-succinyllysine is present on K12. At K17 the chain carries N6-acetyllysine; alternate. The residue at position 17 (K17) is an N6-succinyllysine; alternate. Phosphotyrosine is present on Y25. Residue S36 is modified to Phosphoserine. K41 bears the N6-succinyllysine mark. S50 is subject to Phosphoserine. H59 contributes to the O2 binding site. H88 is a heme b binding site. S103 is subject to Phosphoserine. At T109 the chain carries Phosphothreonine. Phosphoserine occurs at positions 125 and 132. A phosphothreonine mark is found at T135 and T138. A Phosphoserine modification is found at S139.

It belongs to the globin family. Heterotetramer of two alpha chains and two beta chains. Red blood cells.

Involved in oxygen transport from the lung to the various peripheral tissues. Its function is as follows. Hemopressin acts as an antagonist peptide of the cannabinoid receptor CNR1. Hemopressin-binding efficiently blocks cannabinoid receptor CNR1 and subsequent signaling. The chain is Hemoglobin subunit alpha (HBA) from Dasyurus viverrinus (Eastern quoll).